We begin with the raw amino-acid sequence, 222 residues long: GTP cyclohydrolase 1 (222 aa).

Cysteine 111, histidine 114, and cysteine 182 together coordinate Zn(2+).

Belongs to the GTP cyclohydrolase I family. Homomer.

It carries out the reaction GTP + H2O = 7,8-dihydroneopterin 3'-triphosphate + formate + H(+). Its pathway is cofactor biosynthesis; 7,8-dihydroneopterin triphosphate biosynthesis; 7,8-dihydroneopterin triphosphate from GTP: step 1/1. The chain is GTP cyclohydrolase 1 from Klebsiella pneumoniae (strain 342).